A 92-amino-acid polypeptide reads, in one-letter code: Acylphosphatase (92 aa).

Positions arginine 5–tryptophan 92 constitute an Acylphosphatase-like domain. Catalysis depends on residues arginine 20 and asparagine 38.

The protein belongs to the acylphosphatase family.

It carries out the reaction an acyl phosphate + H2O = a carboxylate + phosphate + H(+). The chain is Acylphosphatase (acyP) from Chloroflexus aurantiacus (strain ATCC 29366 / DSM 635 / J-10-fl).